The following is a 368-amino-acid chain: tRNA-specific 2-thiouridylase MnmA (368 aa).

ATP-binding positions include 11–18 (GMSGGVDS) and methionine 37. The interaction with target base in tRNA stretch occupies residues 97 to 99 (NPD). Cysteine 102 acts as the Nucleophile in catalysis. Cysteine 102 and cysteine 199 are disulfide-bonded. Residue glycine 127 coordinates ATP. The interaction with tRNA stretch occupies residues 149–151 (KDQ). Cysteine 199 (cysteine persulfide intermediate) is an active-site residue. The interaction with tRNA stretch occupies residues 311–312 (RY).

The protein belongs to the MnmA/TRMU family. Interacts with TusE.

The protein resides in the cytoplasm. The catalysed reaction is S-sulfanyl-L-cysteinyl-[protein] + uridine(34) in tRNA + AH2 + ATP = 2-thiouridine(34) in tRNA + L-cysteinyl-[protein] + A + AMP + diphosphate + H(+). Catalyzes the 2-thiolation of uridine at the wobble position (U34) of tRNA(Lys), tRNA(Glu) and tRNA(Gln), leading to the formation of s(2)U34, the first step of tRNA-mnm(5)s(2)U34 synthesis. Sulfur is provided by IscS, via a sulfur-relay system. Binds ATP and its substrate tRNAs. This chain is tRNA-specific 2-thiouridylase MnmA, found in Salmonella typhimurium (strain LT2 / SGSC1412 / ATCC 700720).